We begin with the raw amino-acid sequence, 420 residues long: Caspase-12 (420 aa).

Residues 1 to 92 form the CARD domain; it reads MAAKRTHERD…QLSLQFPSDD (92 aa). 2 positions are modified to phosphoserine: Ser-85 and Ser-90. Residues 93 to 115 are disordered; that stretch reads EEDELQKMFTPSSASESRGKVED. Residues His-251 and Cys-299 contribute to the active site.

It belongs to the peptidase C14A family. Heterotetramer that consists of two anti-parallel arranged heterodimers, each one formed by two subunits (Potential). May interact with TRAF2.

In terms of biological role, involved in the activation cascade of caspases responsible for apoptosis execution. The chain is Caspase-12 (Casp12) from Rattus norvegicus (Rat).